The sequence spans 601 residues: Trehalose synthase/amylase TreS (601 aa).

Residues 1 to 21 (MNEAEHSVEHPPVQGSHVEGG) form a disordered region. D98 lines the substrate pocket. N140 provides a ligand contact to Ca(2+). 2 residues coordinate substrate: H141 and Q206. Residue D208 coordinates Ca(2+). R236 provides a ligand contact to substrate. D238 (nucleophile) is an active-site residue. Ca(2+)-binding residues include Y242, L243, and E245. E280 (proton donor) is an active-site residue. Substrate-binding residues include H349 and D350.

It belongs to the glycosyl hydrolase 13 family. TreS subfamily. As to quaternary structure, homohexamer.

It catalyses the reaction D-maltose = alpha,alpha-trehalose. The catalysed reaction is Endohydrolysis of (1-&gt;4)-alpha-D-glucosidic linkages in polysaccharides containing three or more (1-&gt;4)-alpha-linked D-glucose units.. Its pathway is glycan biosynthesis; glycogen biosynthesis. It participates in capsule biogenesis; capsule polysaccharide biosynthesis. Functionally, catalyzes the reversible interconversion of maltose and trehalose by transglucosylation. Also displays amylase activity, catalyzing the endohydrolysis of (1-&gt;4)-alpha-D-glucosidic linkages in glycogen and maltooligosaccharides such as maltoheptaose, to produce maltose which then can be converted to trehalose. TreS plays a key role in the utilization of trehalose for the production of glycogen and alpha-glucan via the TreS-Pep2 branch involved in the biosynthesis of maltose-1-phosphate (M1P). Might also function as a sensor and/or regulator of trehalose levels within the cell. Thus, when trehalose levels in the cell become dangerously low, TreS could expedite the conversion of glycogen to maltose via its amylase activity and then convert the maltose to trehalose; but this enzyme also could expedite or promote the conversion of trehalose to glycogen when cytoplasmic trehalose levels become too high. The sequence is that of Trehalose synthase/amylase TreS from Mycobacterium tuberculosis (strain CDC 1551 / Oshkosh).